A 311-amino-acid chain; its full sequence is Terpentetriene synthase (311 aa).

Residues 77-81 carry the DDXXD motif motif; sequence DDRWD.

Belongs to the terpene synthase family. Homodimer. Requires Mg(2+) as cofactor.

The enzyme catalyses terpentedienyl diphosphate = terpentetriene + diphosphate. The protein operates within antibiotic biosynthesis. Functionally, involved in the production of the isoprenoid antibiotic terpentecin. Converts terpentedienol diphosphate (TDP) into terpentetriene (TTE). Can also accept geranylgeranyl diphosphate (GGDP) and farnesyl diphosphate (FDP) as substrates. This Kitasatospora griseola (Streptomyces griseolosporeus) protein is Terpentetriene synthase (cyc2).